The primary structure comprises 457 residues: Siroheme synthase (457 aa).

The precorrin-2 dehydrogenase /sirohydrochlorin ferrochelatase stretch occupies residues 1 to 204 (MDHLPIFCQL…NDQKAITETT (204 aa)). Residues 22-23 (DV) and 43-44 (LA) each bind NAD(+). At Ser-128 the chain carries Phosphoserine. The interval 216–457 (GEVVLVGAGP…RDKLNWFSNH (242 aa)) is uroporphyrinogen-III C-methyltransferase. Pro-225 is an S-adenosyl-L-methionine binding site. Asp-248 acts as the Proton acceptor in catalysis. The active-site Proton donor is Lys-270. Residues 301–303 (GGD), Ile-306, 331–332 (TA), Met-382, and Gly-411 contribute to the S-adenosyl-L-methionine site.

This sequence in the N-terminal section; belongs to the precorrin-2 dehydrogenase / sirohydrochlorin ferrochelatase family. In the C-terminal section; belongs to the precorrin methyltransferase family.

It carries out the reaction uroporphyrinogen III + 2 S-adenosyl-L-methionine = precorrin-2 + 2 S-adenosyl-L-homocysteine + H(+). The enzyme catalyses precorrin-2 + NAD(+) = sirohydrochlorin + NADH + 2 H(+). It catalyses the reaction siroheme + 2 H(+) = sirohydrochlorin + Fe(2+). The protein operates within cofactor biosynthesis; adenosylcobalamin biosynthesis; precorrin-2 from uroporphyrinogen III: step 1/1. Its pathway is cofactor biosynthesis; adenosylcobalamin biosynthesis; sirohydrochlorin from precorrin-2: step 1/1. It participates in porphyrin-containing compound metabolism; siroheme biosynthesis; precorrin-2 from uroporphyrinogen III: step 1/1. It functions in the pathway porphyrin-containing compound metabolism; siroheme biosynthesis; siroheme from sirohydrochlorin: step 1/1. The protein operates within porphyrin-containing compound metabolism; siroheme biosynthesis; sirohydrochlorin from precorrin-2: step 1/1. Multifunctional enzyme that catalyzes the SAM-dependent methylations of uroporphyrinogen III at position C-2 and C-7 to form precorrin-2 via precorrin-1. Then it catalyzes the NAD-dependent ring dehydrogenation of precorrin-2 to yield sirohydrochlorin. Finally, it catalyzes the ferrochelation of sirohydrochlorin to yield siroheme. The protein is Siroheme synthase of Escherichia coli O6:K15:H31 (strain 536 / UPEC).